The following is a 315-amino-acid chain: Olfactory receptor 4K3 (315 aa).

The Extracellular portion of the chain corresponds to 1-25; the sequence is MAWSNQSAVTEFILRGLSSSLELQI. A glycan (N-linked (GlcNAc...) asparagine) is linked at Asn-5. A helical transmembrane segment spans residues 26–49; the sequence is FYFLFFSIVYAATVLGNLLIVVTI. Over 50 to 57 the chain is Cytoplasmic; it reads ASEPHLHS. Residues 58 to 79 form a helical membrane-spanning segment; it reads PMYFLLGNLSFIDMSLASFATP. The Extracellular segment spans residues 80-100; the sequence is KMIADFLREHKAISFEGCMTQ. A disulfide bridge links Cys-97 with Cys-189. The chain crosses the membrane as a helical span at residues 101–120; that stretch reads MFFLHLLGGAEIVLLISMSF. The Cytoplasmic segment spans residues 121-139; that stretch reads DRYVAICKPLHYLTIMSRR. The chain crosses the membrane as a helical span at residues 140 to 158; sequence MCVGLVILSWIVGIFHALS. Over 159 to 195 the chain is Extracellular; it reads QLAFTVNLPFCGPNEVDSFFCDLPLVIKLACVDTYIL. Residues 196-219 form a helical membrane-spanning segment; it reads GVFMISTSGMIALVCFILLVISYT. Over 220–235 the chain is Cytoplasmic; that stretch reads IILVTVRQRSSGGSSK. Residues 236–258 traverse the membrane as a helical segment; sequence ALSTCSAHFTVVTLFFGPCTFIY. Topologically, residues 259 to 269 are extracellular; the sequence is VWPFTNFPIDK. A helical membrane pass occupies residues 270-289; the sequence is VLSVFYTIYTPLLNPVIYTV. Residues 290–315 are Cytoplasmic-facing; it reads RNKDVKYSMRKLSSHIFKSRKTDHTP.

It belongs to the G-protein coupled receptor 1 family.

The protein resides in the cell membrane. In terms of biological role, odorant receptor. The polypeptide is Olfactory receptor 4K3 (OR4K3) (Homo sapiens (Human)).